The primary structure comprises 545 residues: Monocarboxylate transporter 8 (545 aa).

Residues 1–98 (MALPSPASEE…VETRGTARGF (98 aa)) form a disordered region. Ala2 carries the N-acetylalanine modification. The Cytoplasmic segment spans residues 2–102 (ALPSPASEEA…GTARGFQPPE (101 aa)). A run of 2 repeats spans residues 29-50 (PVPEPEPEPEPEPEPEPEPVPV) and 51-72 (PPPEPQPEPEPQPLPDPAPLPV). Positions 29–72 (PVPEPEPEPEPEPEPEPEPVPVPPPEPQPEPEPQPLPDPAPLPV) are 2 X 22 AA approximate tandem repeats. The segment covering 33–45 (PEPEPEPEPEPEP) has biased composition (acidic residues). The segment covering 46–70 (EPVPVPPPEPQPEPEPQPLPDPAPL) has biased composition (pro residues). The helical transmembrane segment at 103–123 (GGFGWIVVFAATWCNGSIFGI) threads the bilayer. Topologically, residues 124–149 (HNSVGILYSMLLEEEKEKNRQVEFQA) are extracellular. The chain crosses the membrane as a helical span at residues 150-170 (AWVGALAMGMIFFCSPIVSIF). At 171–181 (TDRLGCRITAT) the chain is on the cytoplasmic side. Residues 182–202 (TGAAVAFIGLHTSSFTSSLSL) traverse the membrane as a helical segment. At 203-204 (RY) the chain is on the extracellular side. A helical transmembrane segment spans residues 205 to 225 (FTYGILFGCGCSFAFQPSLVI). Residues 226-235 (LGHYFQRRLG) lie on the Cytoplasmic side of the membrane. A helical transmembrane segment spans residues 236–256 (LANGVVSAGSSIFSMSFPFLI). Residues 257-264 (KMLGDRIK) lie on the Extracellular side of the membrane. A helical transmembrane segment spans residues 265–285 (LAQTFQVLSTFMFVLTLLSLT). Residues 286–328 (YRPLLPSSQDTPSKRGAHTLRQRFLVQFRKYFNMRVFRQRTYR) are Cytoplasmic-facing. Residues 329 to 349 (IWAFGIAAAALGYFVPYVHLM) traverse the membrane as a helical segment. At 350–362 (KYVEDKFKEIKET) the chain is on the extracellular side. The chain crosses the membrane as a helical span at residues 363 to 383 (WVLLVCIGATSGLGRLVSGHI). At 384 to 392 (SDSIPGLKK) the chain is on the cytoplasmic side. The helical transmembrane segment at 393 to 413 (IYLQVLSFLLLGLMSMMIPLC) threads the bilayer. Residues 414–415 (RD) lie on the Extracellular side of the membrane. The helical transmembrane segment at 416 to 436 (FGGLIVVCLFLGLCDGFFITI) threads the bilayer. Topologically, residues 437–453 (MAPIAFELVGPMQASQA) are cytoplasmic. Residues 454 to 474 (IGYLLGMMALPMIAGPPIAGL) traverse the membrane as a helical segment. The Extracellular segment spans residues 475–483 (LRNCFGNYH). A helical membrane pass occupies residues 484–504 (VAFYFAGVPPIIGAVILFFVP). Topologically, residues 505-545 (LMHQRMFKKEQRESSKDKMLSHDPDPNGELLPGSPTPEEPI) are cytoplasmic. Residues 514-529 (EQRESSKDKMLSHDPD) show a composition bias toward basic and acidic residues. Residues 514-545 (EQRESSKDKMLSHDPDPNGELLPGSPTPEEPI) are disordered. Position 540 is a phosphothreonine (Thr540).

This sequence belongs to the major facilitator superfamily. Monocarboxylate porter (TC 2.A.1.13) family. In terms of assembly, monomer. Homodimer. Homooligomer. Expressed at highest levels in liver, lower levels in brain, kidney and heart (at protein level). Expressed in microvessels of the blood-brain barrier (BBB) (at protein level).

The protein localises to the cell membrane. Its subcellular location is the apical cell membrane. It catalyses the reaction 3,3',5-triiodo-L-thyronine(out) = 3,3',5-triiodo-L-thyronine(in). It carries out the reaction 3,3',5'-triiodo-L-thyronine(out) = 3,3',5'-triiodo-L-thyronine(in). The catalysed reaction is L-thyroxine(out) = L-thyroxine(in). The enzyme catalyses 3,3'-diiodo-L-thyronine(out) = 3,3'-diiodo-L-thyronine(in). Functionally, specific thyroid hormone transmembrane transporter, that mediates both uptake and efflux of thyroid hormone across the cell membrane independently of pH or a Na(+) gradient. Major substrates are the iodothyronines T3 and T4 and to a lesser extent rT3 and 3,3-diiodothyronine (3,3'-T2). Acts as an important mediator of thyroid hormone transport, especially T3, through the blood-brain barrier. This Rattus norvegicus (Rat) protein is Monocarboxylate transporter 8 (SLC16A2).